Reading from the N-terminus, the 589-residue chain is 3-(3-hydroxy-phenyl)propionate/3-hydroxycinnamic acid hydroxylase (589 aa).

FAD is bound by residues 15 to 44 and 283 to 293; these read DVLIIGAGPVGLTLANTLGMAGVRVIVAEK and FRVDRILLAGD.

This sequence belongs to the PheA/TfdB FAD monooxygenase family. FAD serves as cofactor.

It carries out the reaction 3-(3-hydroxyphenyl)propanoate + NADH + O2 + H(+) = 3-(2,3-dihydroxyphenyl)propanoate + NAD(+) + H2O. The catalysed reaction is (2E)-3-(3-hydroxyphenyl)prop-2-enoate + NADH + O2 + H(+) = (2E)-3-(2,3-dihydroxyphenyl)prop-2-enoate + NAD(+) + H2O. It participates in aromatic compound metabolism; 3-phenylpropanoate degradation. Catalyzes the insertion of one atom of molecular oxygen into position 2 of the phenyl ring of 3-(3-hydroxyphenyl)propionate (3-HPP) and hydroxycinnamic acid (3HCI). The polypeptide is 3-(3-hydroxy-phenyl)propionate/3-hydroxycinnamic acid hydroxylase (Comamonas testosteroni (Pseudomonas testosteroni)).